The primary structure comprises 314 residues: Malate dehydrogenase (314 aa).

Residues 11–16 (GSGNIG) and aspartate 35 each bind NAD(+). Substrate is bound by residues arginine 84 and arginine 90. NAD(+)-binding positions include asparagine 97 and 120–122 (ITN). Asparagine 122 and arginine 153 together coordinate substrate. The active-site Proton acceptor is histidine 177.

Belongs to the LDH/MDH superfamily. MDH type 3 family.

The enzyme catalyses (S)-malate + NAD(+) = oxaloacetate + NADH + H(+). Catalyzes the reversible oxidation of malate to oxaloacetate. In Rickettsia conorii (strain ATCC VR-613 / Malish 7), this protein is Malate dehydrogenase.